The chain runs to 466 residues: Argininosuccinate lyase (466 aa).

Belongs to the lyase 1 family. Argininosuccinate lyase subfamily.

The protein localises to the cytoplasm. The enzyme catalyses 2-(N(omega)-L-arginino)succinate = fumarate + L-arginine. Its pathway is amino-acid biosynthesis; L-arginine biosynthesis; L-arginine from L-ornithine and carbamoyl phosphate: step 3/3. The chain is Argininosuccinate lyase from Methylocella silvestris (strain DSM 15510 / CIP 108128 / LMG 27833 / NCIMB 13906 / BL2).